Reading from the N-terminus, the 115-residue chain is Type 3 secretion system chaperone PscG (115 aa).

The protein belongs to the YscG family. In terms of assembly, forms a stable heterotrimeric complex with PscE and PscF/SctF in the cytoplasm. Co-stabilized by PscE.

The protein resides in the cytoplasm. In terms of biological role, chaperone of the type III secretion system (T3SS), also called injectisome, which is used to inject bacterial effector proteins into eukaryotic host cells, facilitating the establishment and dissemination of infection. Along with PscE, prevents premature polymerization of the PscF/SctF needle protein within the cytoplasm. Required for type III secretion needle assembly. Also required for cytotoxicity by influencing PscF/SctF levels. This Pseudomonas aeruginosa (strain ATCC 15692 / DSM 22644 / CIP 104116 / JCM 14847 / LMG 12228 / 1C / PRS 101 / PAO1) protein is Type 3 secretion system chaperone PscG (pscG).